The chain runs to 465 residues: Methylenetetrahydrofolate--tRNA-(uracil-5-)-methyltransferase TrmFO (465 aa).

10–15 lines the FAD pocket; that stretch reads GAGLAG.

It belongs to the MnmG family. TrmFO subfamily. Requires FAD as cofactor.

Its subcellular location is the cytoplasm. The enzyme catalyses uridine(54) in tRNA + (6R)-5,10-methylene-5,6,7,8-tetrahydrofolate + NADH + H(+) = 5-methyluridine(54) in tRNA + (6S)-5,6,7,8-tetrahydrofolate + NAD(+). The catalysed reaction is uridine(54) in tRNA + (6R)-5,10-methylene-5,6,7,8-tetrahydrofolate + NADPH + H(+) = 5-methyluridine(54) in tRNA + (6S)-5,6,7,8-tetrahydrofolate + NADP(+). Its function is as follows. Catalyzes the folate-dependent formation of 5-methyl-uridine at position 54 (M-5-U54) in all tRNAs. The polypeptide is Methylenetetrahydrofolate--tRNA-(uracil-5-)-methyltransferase TrmFO (Deinococcus radiodurans (strain ATCC 13939 / DSM 20539 / JCM 16871 / CCUG 27074 / LMG 4051 / NBRC 15346 / NCIMB 9279 / VKM B-1422 / R1)).